Consider the following 545-residue polypeptide: ATP synthase subunit alpha (545 aa).

Position 173 to 180 (173 to 180 (GDRQTGKT)) interacts with ATP.

The protein belongs to the ATPase alpha/beta chains family. As to quaternary structure, F-type ATPases have 2 components, CF(1) - the catalytic core - and CF(0) - the membrane proton channel. CF(1) has five subunits: alpha(3), beta(3), gamma(1), delta(1), epsilon(1). CF(0) has three main subunits: a(1), b(2) and c(9-12). The alpha and beta chains form an alternating ring which encloses part of the gamma chain. CF(1) is attached to CF(0) by a central stalk formed by the gamma and epsilon chains, while a peripheral stalk is formed by the delta and b chains.

The protein localises to the cell membrane. It carries out the reaction ATP + H2O + 4 H(+)(in) = ADP + phosphate + 5 H(+)(out). Produces ATP from ADP in the presence of a proton gradient across the membrane. The alpha chain is a regulatory subunit. The sequence is that of ATP synthase subunit alpha from Clavibacter sepedonicus (Clavibacter michiganensis subsp. sepedonicus).